The chain runs to 73 residues: Defensin-like protein 34 (73 aa).

The N-terminal stretch at 1–25 is a signal peptide; that stretch reads MASNKVSFFLVLCLCVLSTAEFGEA. Cystine bridges form between C33–C59, C45–C68, and C49–C70.

Belongs to the DEFL family.

The protein resides in the secreted. The sequence is that of Defensin-like protein 34 from Arabidopsis thaliana (Mouse-ear cress).